The chain runs to 172 residues: L-methionine sulfoximine/L-methionine sulfone acetyltransferase (172 aa).

The N-acetyltransferase domain maps to 3–166; that stretch reads ASIRDAGVAD…DLTFMQLNLD (164 aa). Substrate-binding positions include 75 to 77 and 85 to 87; these read RPF and EHS. Residues 88 to 90, 96 to 101, and Asn127 contribute to the acetyl-CoA site; these read VYV and GKGLGV.

In terms of assembly, homodimer.

The enzyme catalyses L-methionine sulfoximine + acetyl-CoA = N-acetyl-L-methionine sulfoximine + CoA + H(+). It carries out the reaction L-methionine sulfone + acetyl-CoA = N-acetyl-L-methionine sulfone + CoA + H(+). In terms of biological role, plays a role in the resistance against the toxic effects of L-methionine sulfoximine (MSX), a rare amino acid, which inhibits glutamine synthetase (GlnA). Catalyzes the acetylation of L-methionine sulfoximine (MSX). It can also use L-methionine sulfone (MSO). In Pseudomonas paraeruginosa (strain DSM 24068 / PA7) (Pseudomonas aeruginosa (strain PA7)), this protein is L-methionine sulfoximine/L-methionine sulfone acetyltransferase.